We begin with the raw amino-acid sequence, 37 residues long: Bactericidin B-3 (37 aa).

Residue Gly-37 is modified to Glycine amide.

The protein belongs to the cecropin family.

The protein localises to the secreted. In terms of biological role, cecropins have lytic and antibacterial activity against several Gram-positive and Gram-negative bacteria. In Manduca sexta (Tobacco hawkmoth), this protein is Bactericidin B-3.